The chain runs to 213 residues: Redox-sensing transcriptional repressor Rex (213 aa).

The segment at residues 17–56 is a DNA-binding region (H-T-H motif); that stretch reads LYYRIFKRFYADQVEKASSKQIADAMGIDSATVRRDFSYF. Residue 91-96 coordinates NAD(+); it reads GCGNIG.

It belongs to the transcriptional regulatory Rex family. In terms of assembly, homodimer.

Its subcellular location is the cytoplasm. Functionally, modulates transcription in response to changes in cellular NADH/NAD(+) redox state. This chain is Redox-sensing transcriptional repressor Rex, found in Streptococcus uberis (strain ATCC BAA-854 / 0140J).